The sequence spans 479 residues: ATP-dependent protease ATPase subunit HslU (479 aa).

Residues I32, 74 to 79 (GVGKTE), D290, E355, and R427 each bind ATP.

The protein belongs to the ClpX chaperone family. HslU subfamily. As to quaternary structure, a double ring-shaped homohexamer of HslV is capped on each side by a ring-shaped HslU homohexamer. The assembly of the HslU/HslV complex is dependent on binding of ATP.

Its subcellular location is the cytoplasm. ATPase subunit of a proteasome-like degradation complex; this subunit has chaperone activity. The binding of ATP and its subsequent hydrolysis by HslU are essential for unfolding of protein substrates subsequently hydrolyzed by HslV. HslU recognizes the N-terminal part of its protein substrates and unfolds these before they are guided to HslV for hydrolysis. The sequence is that of ATP-dependent protease ATPase subunit HslU from Leptospira interrogans serogroup Icterohaemorrhagiae serovar Lai (strain 56601).